The following is a 240-amino-acid chain: NKG2-E type II integral membrane protein (240 aa).

Positions 1–12 (MSKQRGTFSEVS) are enriched in polar residues. Positions 1–31 (MSKQRGTFSEVSLAQDPKWQQRKPKGNKSSI) are disordered. Topologically, residues 1–70 (MSKQRGTFSE…CQGLLPPPEK (70 aa)) are cytoplasmic. The helical; Signal-anchor for type II membrane protein transmembrane segment at 71–93 (LTAEVLGIICIVLMATVLKTIVL) threads the bilayer. The Extracellular portion of the chain corresponds to 94 to 240 (IPFLEQNNSS…IMLTRLVLNS (147 aa)). Asn-100 carries an N-linked (GlcNAc...) asparagine glycan. Residues 116–230 (HCPEEWITYS…GSSRIIRRGF (115 aa)) form the C-type lectin domain. The cysteines at positions 117 and 128 are disulfide-linked. N-linked (GlcNAc...) asparagine glycosylation is found at Asn-149 and Asn-179. The cysteines at positions 207 and 220 are disulfide-linked.

In terms of assembly, can form disulfide-bonded heterodimer with CD94. As to expression, natural killer cells.

The protein resides in the membrane. Plays a role as a receptor for the recognition of MHC class I HLA-E molecules by NK cells and some cytotoxic T-cells. This chain is NKG2-E type II integral membrane protein (KLRC3), found in Homo sapiens (Human).